We begin with the raw amino-acid sequence, 419 residues long: Enolase (419 aa).

Glutamine 160 serves as a coordination point for (2R)-2-phosphoglycerate. The active-site Proton donor is glutamate 204. Mg(2+)-binding residues include aspartate 240, glutamate 283, and aspartate 309. The (2R)-2-phosphoglycerate site is built by lysine 334, arginine 363, serine 364, and lysine 385. Residue lysine 334 is the Proton acceptor of the active site.

The protein belongs to the enolase family. Requires Mg(2+) as cofactor.

It is found in the cytoplasm. The protein resides in the secreted. It localises to the cell surface. The catalysed reaction is (2R)-2-phosphoglycerate = phosphoenolpyruvate + H2O. Its pathway is carbohydrate degradation; glycolysis; pyruvate from D-glyceraldehyde 3-phosphate: step 4/5. Catalyzes the reversible conversion of 2-phosphoglycerate (2-PG) into phosphoenolpyruvate (PEP). It is essential for the degradation of carbohydrates via glycolysis. The chain is Enolase from Pyrobaculum aerophilum (strain ATCC 51768 / DSM 7523 / JCM 9630 / CIP 104966 / NBRC 100827 / IM2).